Reading from the N-terminus, the 215-residue chain is Adenylate kinase (215 aa).

Residue 10-15 (GAGKGT) participates in ATP binding. The tract at residues 30–58 (STGDMLREAKRSGTLEKRYLDIMDSGGLL) is NMP. AMP-binding positions include Thr31, Arg36, 56–58 (GLL), 84–87 (GFPR), and Gln91. The tract at residues 128 to 158 (HRRTDKRSGQIYHLVYNPPPPGAELEHRADD) is LID. ATP is bound by residues Arg129 and 138-139 (IY). Residues Arg155 and Arg166 each contribute to the AMP site. Gly194 contributes to the ATP binding site.

It belongs to the adenylate kinase family. As to quaternary structure, monomer.

It localises to the cytoplasm. It catalyses the reaction AMP + ATP = 2 ADP. It functions in the pathway purine metabolism; AMP biosynthesis via salvage pathway; AMP from ADP: step 1/1. Functionally, catalyzes the reversible transfer of the terminal phosphate group between ATP and AMP. Plays an important role in cellular energy homeostasis and in adenine nucleotide metabolism. This is Adenylate kinase from Sorangium cellulosum (strain So ce56) (Polyangium cellulosum (strain So ce56)).